Here is a 511-residue protein sequence, read N- to C-terminus: Histidine ammonia-lyase (511 aa).

The segment at residues 142–144 (ASG) is a cross-link (5-imidazolinone (Ala-Gly)). Residue S143 is modified to 2,3-didehydroalanine (Ser).

This sequence belongs to the PAL/histidase family. Post-translationally, contains an active site 4-methylidene-imidazol-5-one (MIO), which is formed autocatalytically by cyclization and dehydration of residues Ala-Ser-Gly.

It is found in the cytoplasm. The enzyme catalyses L-histidine = trans-urocanate + NH4(+). The protein operates within amino-acid degradation; L-histidine degradation into L-glutamate; N-formimidoyl-L-glutamate from L-histidine: step 1/3. The protein is Histidine ammonia-lyase of Rhizobium rhizogenes (strain K84 / ATCC BAA-868) (Agrobacterium radiobacter).